A 434-amino-acid chain; its full sequence is Putative F-box/FBD/LRR-repeat protein At1g16940 (434 aa).

The F-box domain maps to 10–66 (HNIINQLPDSLLCEIFFNLPTEEVVKTSLICRRWRYVWQSLPGLDLVINGSKNYDKF). 6 LRR repeats span residues 72-99 (FMFL…MMNN), 114-141 (RRYV…KLHR), 164-189 (INFV…TMDK), 204-231 (CLTN…KLNR), 252-277 (DVAY…TISF), and 306-331 (MAVG…VMGF). An FBD domain is found at 336–385 (WGINFSDVPQCVLSSLEFVEVKAREVADMKKLWSYFMENSTVLKKFTLCL).

This is Putative F-box/FBD/LRR-repeat protein At1g16940 from Arabidopsis thaliana (Mouse-ear cress).